Reading from the N-terminus, the 429-residue chain is Serine hydroxymethyltransferase (429 aa).

(6S)-5,6,7,8-tetrahydrofolate-binding positions include leucine 126 and 130-132 (GHL). Lysine 235 is subject to N6-(pyridoxal phosphate)lysine. 359–361 (SPF) contributes to the (6S)-5,6,7,8-tetrahydrofolate binding site.

It belongs to the SHMT family. In terms of assembly, homodimer. Requires pyridoxal 5'-phosphate as cofactor.

It is found in the cytoplasm. The catalysed reaction is (6R)-5,10-methylene-5,6,7,8-tetrahydrofolate + glycine + H2O = (6S)-5,6,7,8-tetrahydrofolate + L-serine. The protein operates within one-carbon metabolism; tetrahydrofolate interconversion. Its pathway is amino-acid biosynthesis; glycine biosynthesis; glycine from L-serine: step 1/1. Its function is as follows. Catalyzes the reversible interconversion of serine and glycine with tetrahydrofolate (THF) serving as the one-carbon carrier. This reaction serves as the major source of one-carbon groups required for the biosynthesis of purines, thymidylate, methionine, and other important biomolecules. Also exhibits THF-independent aldolase activity toward beta-hydroxyamino acids, producing glycine and aldehydes, via a retro-aldol mechanism. This chain is Serine hydroxymethyltransferase, found in Synechococcus sp. (strain CC9902).